The sequence spans 76 residues: Omega/kappa-hexatoxin-Ar1g (76 aa).

Positions methionine 1–alanine 22 are cleaved as a signal peptide. A propeptide spanning residues glycine 23–valine 35 is cleaved from the precursor. Intrachain disulfides connect cysteine 40/cysteine 55, cysteine 47/cysteine 60, and cysteine 54/cysteine 74.

This sequence belongs to the neurotoxin 08 (Shiva) family. 02 (omega/kappa toxin) subfamily. As to expression, expressed by the venom gland.

The protein localises to the secreted. In terms of biological role, toxin that may inhibit ion channels. This Atrax robustus (Sydney funnel-web spider) protein is Omega/kappa-hexatoxin-Ar1g.